Here is a 467-residue protein sequence, read N- to C-terminus: ATP-dependent protease ATPase subunit HslU (467 aa).

ATP is bound by residues Val22 and 64-69 (GVGKTE). The tract at residues 149-192 (QTNNPLESLFGGAIPNFGQNNEDEEEPPTEEIKTKRSEIKRQLE) is disordered. Residues 178–192 (EEIKTKRSEIKRQLE) show a composition bias toward basic and acidic residues. The ATP site is built by Asp280, Glu345, and Arg417.

Belongs to the ClpX chaperone family. HslU subfamily. As to quaternary structure, a double ring-shaped homohexamer of HslV is capped on each side by a ring-shaped HslU homohexamer. The assembly of the HslU/HslV complex is dependent on binding of ATP.

It is found in the cytoplasm. Its function is as follows. ATPase subunit of a proteasome-like degradation complex; this subunit has chaperone activity. The binding of ATP and its subsequent hydrolysis by HslU are essential for unfolding of protein substrates subsequently hydrolyzed by HslV. HslU recognizes the N-terminal part of its protein substrates and unfolds these before they are guided to HslV for hydrolysis. This is ATP-dependent protease ATPase subunit HslU from Staphylococcus aureus (strain Mu3 / ATCC 700698).